The sequence spans 238 residues: Putative tyrosine-protein phosphatase OCA1 (238 aa).

The interval 1–43 is disordered; that stretch reads MTSKVGEYEDVPEDESRLTEENVSVPEEEVEDEDEEEDDDDDH. Thr-2 is modified (N-acetylthreonine). Position 24 is a phosphoserine (Ser-24). Positions 26–42 are enriched in acidic residues; it reads PEEEVEDEDEEEDDDDD. The region spanning 72–230 is the Tyrosine-protein phosphatase domain; that stretch reads NFCPVERYLY…LVKIDKNKAP (159 aa). Catalysis depends on Cys-168, which acts as the Phosphocysteine intermediate.

The protein belongs to the protein-tyrosine phosphatase family.

It is found in the cytoplasm. The enzyme catalyses O-phospho-L-tyrosyl-[protein] + H2O = L-tyrosyl-[protein] + phosphate. Putative tyrosine-protein phosphatase required for protection against superoxide stress. Involved in cell-cycle delay in response to linoleic acid hydroperoxide (LoaOOH). The chain is Putative tyrosine-protein phosphatase OCA1 (OCA1) from Saccharomyces cerevisiae (strain YJM789) (Baker's yeast).